Consider the following 923-residue polypeptide: Tyrosine-protein kinase receptor torso (923 aa).

A signal peptide spans 1–20; the sequence is MLIFYAKYAFIFWFFVGSNQ. The Extracellular portion of the chain corresponds to 21-399; it reads GEMLLMDKIS…VLLSEGNMVK (379 aa). N-linked (GlcNAc...) asparagine glycosylation is found at N37, N63, N107, N142, N146, N287, N298, N314, N326, N342, N348, and N377. Residues 400-420 form a helical membrane-spanning segment; that stretch reads LVLFIIVPICCILMLCSLTFC. The Cytoplasmic portion of the chain corresponds to 421 to 923; it reads RRNRSEVQAL…EEELYLEPLN (503 aa). Residues 475-874 enclose the Protein kinase domain; it reads VLLQDVLGEG…TFSALKHRLG (400 aa). ATP contacts are provided by residues 481-489 and K502; that span reads LGEGAFGLV. Position 608 is a phosphoserine (S608). The segment at 656–687 is disordered; that stretch reads YIPKTAEAPKDRPKRKLKPQPKKDSKQDFKSD. Over residues 676–687 the composition is skewed to basic and acidic residues; that stretch reads PKKDSKQDFKSD. D741 (proton acceptor) is an active-site residue.

This sequence belongs to the protein kinase superfamily. Tyr protein kinase family. Mg(2+) is required as a cofactor. May be auto-phosphorylated on tyrosine residues.

Its subcellular location is the membrane. The catalysed reaction is L-tyrosyl-[protein] + ATP = O-phospho-L-tyrosyl-[protein] + ADP + H(+). Probable receptor tyrosine kinase which is required for determination of anterior and posterior terminal structures in the embryo. During postembryonic development, involved in the initiation of metamorphosis probably by inducing the production of ecdysone in response to prothoracicotropic hormone Ptth. Binding to Ptth stimulates activation of canonical MAPK signaling leading to ERK phosphorylation. This chain is Tyrosine-protein kinase receptor torso (tor), found in Drosophila melanogaster (Fruit fly).